The sequence spans 468 residues: RuvB-like helicase 2 (468 aa).

Residue 76-83 participates in ATP binding; the sequence is GPPSTGKT.

This sequence belongs to the RuvB family. In terms of assembly, may form heterododecamers with RVB1. Component of the SWR1 chromatin remodeling complex, the INO80 chromatin remodeling complex, and of the R2TP complex.

It localises to the nucleus. It carries out the reaction ATP + H2O = ADP + phosphate + H(+). In terms of biological role, DNA helicase which participates in several chromatin remodeling complexes, including the SWR1 and the INO80 complexes. The SWR1 complex mediates the ATP-dependent exchange of histone H2A for the H2A variant HZT1 leading to transcriptional regulation of selected genes by chromatin remodeling. The INO80 complex remodels chromatin by shifting nucleosomes and is involved in DNA repair. Also involved in pre-rRNA processing. The chain is RuvB-like helicase 2 (rvb2) from Emericella nidulans (strain FGSC A4 / ATCC 38163 / CBS 112.46 / NRRL 194 / M139) (Aspergillus nidulans).